The primary structure comprises 362 residues: Peptide chain release factor 1 (362 aa).

Q240 is subject to N5-methylglutamine.

The protein belongs to the prokaryotic/mitochondrial release factor family. Methylated by PrmC. Methylation increases the termination efficiency of RF1.

The protein localises to the cytoplasm. Peptide chain release factor 1 directs the termination of translation in response to the peptide chain termination codons UAG and UAA. This is Peptide chain release factor 1 from Bifidobacterium adolescentis (strain ATCC 15703 / DSM 20083 / NCTC 11814 / E194a).